The chain runs to 367 residues: Protein NDRG4-B (367 aa).

The segment covering 1-12 (MSELRFPEEKPL) has biased composition (basic and acidic residues). 2 disordered regions span residues 1–21 (MSEL…TEME) and 333–367 (LTSA…EVSC). Positions 347–367 (CTQSESSDGIGQINHTMEVSC) are enriched in polar residues.

It belongs to the NDRG family.

The protein localises to the cytoplasm. It is found in the cytosol. Its function is as follows. Contributes to the maintenance of intracerebral BDNF levels within the normal range. May enhance growth factor-induced ERK1 and ERK2 phosphorylation. May attenuate growth factor-promoted ELK1 phosphorylation in a microtubule-dependent manner. The chain is Protein NDRG4-B (ndrg4-b) from Xenopus laevis (African clawed frog).